We begin with the raw amino-acid sequence, 1240 residues long: ABC transporter B family member 15 (1240 aa).

Helical transmembrane passes span methionine 35 to isoleucine 55, valine 82 to tryptophan 102, leucine 158 to tryptophan 180, isoleucine 184 to serine 206, glycine 264 to glycine 284, and glycine 296 to leucine 316. Residues methionine 35–glutamate 324 enclose the ABC transmembrane type-1 1 domain. The region spanning valine 359–histidine 595 is the ABC transporter 1 domain. Glycine 394 to serine 401 contributes to the ATP binding site. Asparagine 542, asparagine 605, and asparagine 622 each carry an N-linked (GlcNAc...) asparagine glycan. The tract at residues serine 617–asparagine 646 is disordered. Positions serine 623–threonine 639 are enriched in low complexity. N-linked (GlcNAc...) asparagine glycosylation occurs at asparagine 646. The ABC transmembrane type-1 2 domain occupies alanine 672 to lysine 960. Transmembrane regions (helical) follow at residues leucine 681 to phenylalanine 701 and isoleucine 714 to histidine 734. N-linked (GlcNAc...) asparagine glycosylation is present at asparagine 769. The next 4 membrane-spanning stretches (helical) occupy residues alanine 794–isoleucine 813, leucine 817–leucine 839, serine 895–leucine 915, and leucine 923–serine 943. The region spanning valine 995–valine 1233 is the ABC transporter 2 domain. The N-linked (GlcNAc...) asparagine glycan is linked to asparagine 1015. Glycine 1030–serine 1037 contributes to the ATP binding site.

This sequence belongs to the ABC transporter superfamily. ABCB family. Multidrug resistance exporter (TC 3.A.1.201) subfamily.

Its subcellular location is the membrane. In Arabidopsis thaliana (Mouse-ear cress), this protein is ABC transporter B family member 15 (ABCB15).